A 145-amino-acid chain; its full sequence is uncharacterized protein (145 aa).

The interval 37–123 (GKGTNTAKSS…MDREASYFAP (87 aa)) is disordered. Over residues 38 to 63 (KGTNTAKSSGGNNGTNLNAKRSNTTQ) the composition is skewed to polar residues.

This is an uncharacterized protein from Caenorhabditis elegans.